A 481-amino-acid polypeptide reads, in one-letter code: MQWEVVIGLEIHTQLATQSKIFSGSATTFGSEPNTQASLVDLGMPGVLPVLNEQAVRMACMFGLAIDAEIGKRNVFARKNYFYPDLPKGYQISQMDLPIVGKGHLDIALEDGTIKRIGVTRAHLEEDAGKSLHEDFSGSTGIDLNRAGTPLLEIVSEPDMRSAKEAVAYVKAIHALVRYLGICDGNMAEGSLRCDCNVSIRPKGQTEFGTRCEIKNVNSFRFIERAINSEIQRQIDLIEDGGKVVQETRLYDPNKDETRSMRSKEEANDYRYFPDPDLLPVVIEDSFLETIRAGLPELPPQKVERFQTQYGLSAYDANVLASSREQADYFEEVVKIGGDAKLAANWVMVELGSLLNKLGVEIDQAPVSAAQLGGMLLRIRDNTISGKIAKTVFEAMAAGEGDADSIIESKGLKQVTDTGAIDKMLDEMLAANAEQVEQYRAADEAKRGKMFGFFVGQAMKASKGKANPGQVNQLLKAKLEG.

This sequence belongs to the GatB/GatE family. GatB subfamily. In terms of assembly, heterotrimer of A, B and C subunits.

The enzyme catalyses L-glutamyl-tRNA(Gln) + L-glutamine + ATP + H2O = L-glutaminyl-tRNA(Gln) + L-glutamate + ADP + phosphate + H(+). The catalysed reaction is L-aspartyl-tRNA(Asn) + L-glutamine + ATP + H2O = L-asparaginyl-tRNA(Asn) + L-glutamate + ADP + phosphate + 2 H(+). Allows the formation of correctly charged Asn-tRNA(Asn) or Gln-tRNA(Gln) through the transamidation of misacylated Asp-tRNA(Asn) or Glu-tRNA(Gln) in organisms which lack either or both of asparaginyl-tRNA or glutaminyl-tRNA synthetases. The reaction takes place in the presence of glutamine and ATP through an activated phospho-Asp-tRNA(Asn) or phospho-Glu-tRNA(Gln). In Pseudomonas putida (strain ATCC 47054 / DSM 6125 / CFBP 8728 / NCIMB 11950 / KT2440), this protein is Aspartyl/glutamyl-tRNA(Asn/Gln) amidotransferase subunit B.